A 263-amino-acid chain; its full sequence is Flagellar L-ring protein (263 aa).

Residues 1 to 15 (MKRLLCLLLLTTLTG) form the signal peptide. Cys-16 carries N-palmitoyl cysteine lipidation. Cys-16 is lipidated: S-diacylglycerol cysteine. The segment at 123-143 (KSADAELSKSNDSSMDPLQVG) is disordered.

This sequence belongs to the FlgH family. As to quaternary structure, the basal body constitutes a major portion of the flagellar organelle and consists of four rings (L,P,S, and M) mounted on a central rod.

It localises to the cell outer membrane. It is found in the bacterial flagellum basal body. In terms of biological role, assembles around the rod to form the L-ring and probably protects the motor/basal body from shearing forces during rotation. This chain is Flagellar L-ring protein, found in Aliivibrio fischeri (strain ATCC 700601 / ES114) (Vibrio fischeri).